Here is a 95-residue protein sequence, read N- to C-terminus: Co-chaperonin GroES (95 aa).

The protein belongs to the GroES chaperonin family. In terms of assembly, heptamer of 7 subunits arranged in a ring. Interacts with the chaperonin GroEL.

It localises to the cytoplasm. Its function is as follows. Together with the chaperonin GroEL, plays an essential role in assisting protein folding. The GroEL-GroES system forms a nano-cage that allows encapsulation of the non-native substrate proteins and provides a physical environment optimized to promote and accelerate protein folding. GroES binds to the apical surface of the GroEL ring, thereby capping the opening of the GroEL channel. The protein is Co-chaperonin GroES of Clostridium acetobutylicum (strain ATCC 824 / DSM 792 / JCM 1419 / IAM 19013 / LMG 5710 / NBRC 13948 / NRRL B-527 / VKM B-1787 / 2291 / W).